Consider the following 1249-residue polypeptide: Myosin-1 (1249 aa).

Residues 1–42 are disordered; sequence MGHSRRPAGGEKKSRGFGRSKAVADVGDGRQTGGKPQVKKAT. Residues 51–730 enclose the Myosin motor domain; the sequence is IGVSDLTLLS…TLFALEAMRD (680 aa). 144-151 contributes to the ATP binding site; that stretch reads GESGAGKT. Serine 372 carries the phosphoserine modification. Residues 419 to 501 form an actin-binding region; it reads SIGILDIYGF…PGVFAALNDA (83 aa). IQ domains are found at residues 734–754 and 755–780; these read HNMA…RTEC and AIRI…QGHQ. One can recognise a TH1 domain in the interval 788 to 978; sequence RRRMSLLGSR…TIHTGPGEPA (191 aa). 2 disordered regions span residues 962–1079 and 1126–1249; these read DDSY…PKKP and WTPE…DDDW. Residues 1021–1035 are compositionally biased toward pro residues; it reads AAQPLPRATPQPAEP. A compositionally biased stretch (low complexity) spans 1036–1051; the sequence is QPAARAVPQPVAAVAA. Composition is skewed to pro residues over residues 1064–1077 and 1139–1150; these read APPP…PAPK and TPKPAPPPPPAA. Positions 1076 to 1137 constitute an SH3 domain; the sequence is PKKPTAKVLY…PEAYLEEQVA (62 aa). The span at 1151 to 1169 shows a compositional bias: low complexity; the sequence is PRSTPAPATNGAAAAAKAK. Polar residues predominate over residues 1200 to 1221; the sequence is VSMNSHDSSGGSGRGTPNSMSN. Residues 1222–1231 show a composition bias toward low complexity; sequence ASLAGGLAEA.

This sequence belongs to the TRAFAC class myosin-kinesin ATPase superfamily. Myosin family. Phosphorylation of the TEDS site (Ser-372) is required for the polarization of the actin cytoskeleton. Phosphorylation probably activates the myosin-I ATPase activity.

The protein localises to the cytoplasm. It localises to the cytoskeleton. The protein resides in the actin patch. Its function is as follows. Type-I myosin implicated in the organization of the actin cytoskeleton. Required for proper actin cytoskeleton polarization. At the cell cortex, assembles in patch-like structures together with proteins from the actin-polymerizing machinery and promotes actin assembly. Functions as actin nucleation-promoting factor (NPF) for the Arp2/3 complex. Plays an important role in polarized growth, spore germination, hyphal morphogenesis, and septal wall formation. In Aspergillus fumigatus (strain ATCC MYA-4609 / CBS 101355 / FGSC A1100 / Af293) (Neosartorya fumigata), this protein is Myosin-1 (myoA).